Here is a 37-residue protein sequence, read N- to C-terminus: Large ribosomal subunit protein bL36 (37 aa).

It belongs to the bacterial ribosomal protein bL36 family.

The polypeptide is Large ribosomal subunit protein bL36 (Mycobacterium leprae (strain Br4923)).